Consider the following 439-residue polypeptide: Chaperone SurA (439 aa).

Residues 1–27 (MRRISSRLSLVLFAALSCATALFPAHA) form the signal peptide. PpiC domains are found at residues 180-281 (GEEF…KLLD) and 293-391 (LEQT…QVEA).

Its subcellular location is the periplasm. The enzyme catalyses [protein]-peptidylproline (omega=180) = [protein]-peptidylproline (omega=0). Its function is as follows. Chaperone involved in the correct folding and assembly of outer membrane proteins. Recognizes specific patterns of aromatic residues and the orientation of their side chains, which are found more frequently in integral outer membrane proteins. May act in both early periplasmic and late outer membrane-associated steps of protein maturation. The polypeptide is Chaperone SurA (Aromatoleum aromaticum (strain DSM 19018 / LMG 30748 / EbN1) (Azoarcus sp. (strain EbN1))).